Reading from the N-terminus, the 836-residue chain is Taste receptor type 1 member 2 (836 aa).

The first 19 residues, 1-19, serve as a signal peptide directing secretion; the sequence is MGPRAKAVCSLFILLQVLA. The Extracellular portion of the chain corresponds to 20–565; it reads EPAENSDFYL…AFLEWHEPST (546 aa). 9 N-linked (GlcNAc...) asparagine glycosylation sites follow: Asn-84, Asn-292, Asn-312, Asn-351, Asn-427, Asn-479, Asn-486, Asn-526, and Asn-546. Residues 566-586 form a helical membrane-spanning segment; that stretch reads IFVVMLTILGFLSTLAIMVIF. Topologically, residues 587–601 are cytoplasmic; the sequence is WRHLHTPVVRSAGGP. A helical membrane pass occupies residues 602–622; sequence MCFLMLVPLLLAYAMVPMYIG. Residues 623 to 634 are Extracellular-facing; that stretch reads QPTFFSCLWRQT. The chain crosses the membrane as a helical span at residues 635–655; it reads FFTLCFTICISCITVRSFQIV. Topologically, residues 656–680 are cytoplasmic; sequence CIFKMARRLPRAYGYWVRCHGPYVF. The helical transmembrane segment at 681-701 threads the bilayer; sequence VASFMVLKVVIVAGNVLATTA. The Extracellular portion of the chain corresponds to 702–724; it reads NPTARPDPDDPNIMVLSCNYRRA. The helical transmembrane segment at 725–745 threads the bilayer; it reads LLFNTSLDLLLSVAGFSFAYM. Residues 746–757 are Cytoplasmic-facing; sequence GKELPTNYNEAK. The chain crosses the membrane as a helical span at residues 758-778; sequence FITLCMTFYFTSSVSLCTFMS. At 779–781 the chain is on the extracellular side; it reads VYD. The chain crosses the membrane as a helical span at residues 782-802; the sequence is GVLVTILDLLITVLNLLGISF. The Cytoplasmic portion of the chain corresponds to 803–836; the sequence is GYFGPKCYMVLFYPERNTQVYFSSMIQGYTMGKD.

It belongs to the G-protein coupled receptor 3 family. TAS1R subfamily. Forms heterodimers with TAS1R3.

Its subcellular location is the cell membrane. In terms of biological role, putative taste receptor. TAS1R2/TAS1R3 recognizes diverse natural and synthetic sweeteners. In Canis lupus familiaris (Dog), this protein is Taste receptor type 1 member 2 (TAS1R2).